A 499-amino-acid polypeptide reads, in one-letter code: Apolipoprotein N-acyltransferase (499 aa).

6 helical membrane-spanning segments follow: residues 18–38 (FSPY…LIIT), 50–70 (LGFL…YISI), 82–102 (IIII…FVIL), 105–125 (FFFP…AWMI), 156–176 (PIIG…MCVL), and 182–202 (SYYP…LNFF). The region spanning 217–461 (IQGNISQHTY…NDFLLEEVFS (245 aa)) is the CN hydrolase domain. Glu-257 serves as the catalytic Proton acceptor. Lys-320 is a catalytic residue. Catalysis depends on Cys-372, which acts as the Nucleophile. Residues 476-496 (LLFFSIICFIISFFIKIKLIF) traverse the membrane as a helical segment.

Belongs to the CN hydrolase family. Apolipoprotein N-acyltransferase subfamily.

The protein resides in the cell membrane. The catalysed reaction is N-terminal S-1,2-diacyl-sn-glyceryl-L-cysteinyl-[lipoprotein] + a glycerophospholipid = N-acyl-S-1,2-diacyl-sn-glyceryl-L-cysteinyl-[lipoprotein] + a 2-acyl-sn-glycero-3-phospholipid + H(+). Its pathway is protein modification; lipoprotein biosynthesis (N-acyl transfer). Catalyzes the phospholipid dependent N-acylation of the N-terminal cysteine of apolipoprotein, the last step in lipoprotein maturation. The sequence is that of Apolipoprotein N-acyltransferase from Wigglesworthia glossinidia brevipalpis.